The primary structure comprises 985 residues: Na(+)/H(+) antiporter (985 aa).

Residues 1 to 12 (MAIWEQLEVSKA) lie on the Cytoplasmic side of the membrane. Residues 13-33 (HVAYACVGVFSSIFSLVSLYV) traverse the membrane as a helical segment. Residues 34–36 (KEK) are Extracellular-facing. The helical transmembrane segment at 37-57 (LYIGESTVAGIFGLIVGPVCL) threads the bilayer. The Cytoplasmic portion of the chain corresponds to 58 to 70 (NWFNPLKWGNSDS). A helical membrane pass occupies residues 71-91 (ITLEITRIVLCLQIFAVAVEL). Topologically, residues 92-105 (PRKYMLKHWVSVTM) are extracellular. The chain crosses the membrane as a helical span at residues 106–126 (LLLPVMTAGWLIIGLFVWILI). Residues 127–128 (PG) are Cytoplasmic-facing. Residues 129–149 (LNFSASLLISACITATDPILA) form a helical membrane-spanning segment. The Extracellular segment spans residues 150-176 (QSVVSGKFAQRVPGHLRNLLSAESGCN). Residues 177-197 (DGMAFPFLFLSMNLILHPGNG) traverse the membrane as a helical segment. Residues 198–203 (REIVKD) are Cytoplasmic-facing. Residues 204–224 (WICVTILYECLFGCLLGCFIG) traverse the membrane as a helical segment. Over 225–244 (YVGRITIRFAEKKNIIDRES) the chain is Extracellular. The chain crosses the membrane as a helical span at residues 245–265 (FLAFYVVLAFMCAGFGSILGV). Residues 266-294 (DDLLVSFAAGATFAWDGWFSQKTQESNVS) are Cytoplasmic-facing. A helical transmembrane segment spans residues 295–315 (TVIDLLLNYAYFIYFGAIIPW). Over 316–319 (SQFN) the chain is Extracellular. A helical membrane pass occupies residues 320 to 340 (NGEIGTNVWRLIILSIVVIFL). Topologically, residues 341–361 (RRIPAVMILRPLIPDIKSWRE) are cytoplasmic. The helical transmembrane segment at 362-382 (ALFVGHFGPIGVGAIFAAILA) threads the bilayer. The Extracellular segment spans residues 383–410 (RGELESTFSDEPTPLNVVPSKEESKHWQ). A helical membrane pass occupies residues 411-431 (LIACIWPITCFFIVTSIIVHG). The Cytoplasmic portion of the chain corresponds to 432–985 (SSVAIITLGR…ALSKTLGLNK (554 aa)). 2 disordered regions span residues 489-701 (MTLS…KPGT) and 726-760 (DRNE…GGRL). Over residues 517-526 (NNDQIGSVAT) the composition is skewed to polar residues. A compositionally biased stretch (basic residues) spans 538–558 (PRRRKLSRKEKRLNRRQKLRN). Basic and acidic residues-rich tracts occupy residues 559–572 (KGRE…KNEM) and 580–593 (DLGR…KEAR). Serine 568 carries the post-translational modification Phosphoserine. Residues 637-646 (SFESSERSSS) are compositionally biased toward low complexity. The segment covering 661–675 (EETESEIESEDEMEN) has biased composition (acidic residues). Basic and acidic residues predominate over residues 676 to 698 (ESERSMASSEERRIRKMKEEEMK). Low complexity predominate over residues 743–756 (SSLTTTMTNLSSSS). Threonine 765 carries the phosphothreonine modification. Residues serine 768 and serine 774 each carry the phosphoserine modification. The segment at 812 to 985 (INPHKSDDDK…ALSKTLGLNK (174 aa)) is disordered. Composition is skewed to basic and acidic residues over residues 815-828 (HKSD…RPRN) and 854-863 (DEEKAIEGPS). Acidic residues predominate over residues 887–920 (LDLEDEPSSEEDLGDSYNMDDSEDYDDNAYESET). Over residues 970-979 (SAAVKSALSK) the composition is skewed to low complexity.

This sequence belongs to the fungal Na(+)/H(+) exchanger family.

Its subcellular location is the cell membrane. In terms of biological role, sodium export from cell, takes up external protons in exchange for internal sodium ions. Also capable of exporting potassium ions. This chain is Na(+)/H(+) antiporter (NHA1), found in Saccharomyces cerevisiae (strain ATCC 204508 / S288c) (Baker's yeast).